The sequence spans 368 residues: Peptide chain release factor 2 (368 aa).

Q249 carries the post-translational modification N5-methylglutamine.

This sequence belongs to the prokaryotic/mitochondrial release factor family. Methylated by PrmC. Methylation increases the termination efficiency of RF2.

Its subcellular location is the cytoplasm. Functionally, peptide chain release factor 2 directs the termination of translation in response to the peptide chain termination codons UGA and UAA. This is Peptide chain release factor 2 from Rhodococcus erythropolis (strain PR4 / NBRC 100887).